Here is a 341-residue protein sequence, read N- to C-terminus: MFVDKTLMITGGTGSFGNAVLSRFLKSNIINDIKEIRIFSRDEKKQEDMRIALNHSKLKFYIGDVRNYQSIDDAMHGVDYVFHAAALKQVPTCEFYPMEAINTNVLGAENVLSAAINNKVTKVIVLSTDKAVYPINAMGLSKALMEKLAIAKARMRSPGETILCVTRYGNVMASRGSVIPLFIHQIKQGKELTITEPSMTRFLMSLVDSVDLVLYAFEHGRQGDIFVQKSPASTIEVLAKALQEIFGSKNAIRFIGTRHGEKHYESLVSSEDMAKADDLGGYYRIPMDGRDLNYAKYFVEGEKKVALLKDYTSHNTKRLNLKEVKELLLTLDYVQEELKNA.

The protein belongs to the polysaccharide synthase family.

The catalysed reaction is UDP-alpha-D-glucose = UDP-alpha-D-galactose. Functionally, epimerizes UDP-galactose to UDP-glucose. The chain is UDP-glucose 4-epimerase (capD) from Rickettsia typhi (strain ATCC VR-144 / Wilmington).